The following is a 384-amino-acid chain: Succinyl-diaminopimelate desuccinylase (384 aa).

Position 71 (H71) interacts with Zn(2+). D73 is a catalytic residue. Position 104 (D104) interacts with Zn(2+). Residue E139 is the Proton acceptor of the active site. Zn(2+) contacts are provided by E140, E168, and H357.

Belongs to the peptidase M20A family. DapE subfamily. As to quaternary structure, homodimer. The cofactor is Zn(2+). Requires Co(2+) as cofactor.

It catalyses the reaction N-succinyl-(2S,6S)-2,6-diaminopimelate + H2O = (2S,6S)-2,6-diaminopimelate + succinate. Its pathway is amino-acid biosynthesis; L-lysine biosynthesis via DAP pathway; LL-2,6-diaminopimelate from (S)-tetrahydrodipicolinate (succinylase route): step 3/3. In terms of biological role, catalyzes the hydrolysis of N-succinyl-L,L-diaminopimelic acid (SDAP), forming succinate and LL-2,6-diaminopimelate (DAP), an intermediate involved in the bacterial biosynthesis of lysine and meso-diaminopimelic acid, an essential component of bacterial cell walls. This is Succinyl-diaminopimelate desuccinylase from Bradyrhizobium sp. (strain ORS 278).